The following is a 441-amino-acid chain: Methionine aminopeptidase 2A (441 aa).

Positions 1-103 (MAIGNPEVAT…SGDFPQGEIQ (103 aa)) are disordered. A compositionally biased stretch (polar residues) spans 18 to 33 (AESSNGNESQLSSDLT). Residues 37-62 (DLAEVKEDEKDNNQEEEDGLKAEAST) show a composition bias toward basic and acidic residues. Residues 63-76 (KKKKKKSKSKKKKS) are compositionally biased toward basic residues. His-194 is a binding site for substrate. Asp-214, Asp-225, and His-294 together coordinate a divalent metal cation. Substrate is bound at residue His-302. 2 residues coordinate a divalent metal cation: Glu-327 and Glu-422.

This sequence belongs to the peptidase M24A family. Methionine aminopeptidase eukaryotic type 2 subfamily. It depends on Co(2+) as a cofactor. The cofactor is Zn(2+). Mn(2+) is required as a cofactor. Fe(2+) serves as cofactor. Ubiquitous. Preferentially expressed in roots.

The protein resides in the cytoplasm. The catalysed reaction is Release of N-terminal amino acids, preferentially methionine, from peptides and arylamides.. Its function is as follows. Cotranslationally removes the N-terminal methionine from nascent proteins. The N-terminal methionine is often cleaved when the second residue in the primary sequence is small and uncharged (Met-Ala-, Cys, Gly, Pro, Ser, Thr, or Val). This Arabidopsis thaliana (Mouse-ear cress) protein is Methionine aminopeptidase 2A.